The following is a 262-amino-acid chain: 5'-nucleotidase SurE (262 aa).

A divalent metal cation-binding residues include aspartate 11, aspartate 12, serine 43, and asparagine 101.

The protein belongs to the SurE nucleotidase family. A divalent metal cation serves as cofactor.

It localises to the cytoplasm. The enzyme catalyses a ribonucleoside 5'-phosphate + H2O = a ribonucleoside + phosphate. Nucleotidase that shows phosphatase activity on nucleoside 5'-monophosphates. The polypeptide is 5'-nucleotidase SurE (Prochlorococcus marinus (strain NATL2A)).